We begin with the raw amino-acid sequence, 217 residues long: 8-oxoguanine DNA glycosylase/AP lyase (217 aa).

Catalysis depends on residues Lys138 and Asp157.

This sequence belongs to the type-2 OGG1 family.

The enzyme catalyses 2'-deoxyribonucleotide-(2'-deoxyribose 5'-phosphate)-2'-deoxyribonucleotide-DNA = a 3'-end 2'-deoxyribonucleotide-(2,3-dehydro-2,3-deoxyribose 5'-phosphate)-DNA + a 5'-end 5'-phospho-2'-deoxyribonucleoside-DNA + H(+). In terms of biological role, catalyzes the excision of an oxidatively damaged form of guanine (7,8-dihydro-8-oxoguanine = 8-oxoG) from DNA. Also cleaves the DNA backbone at apurinic/apyrimidinic sites (AP sites). The sequence is that of 8-oxoguanine DNA glycosylase/AP lyase from Fusobacterium nucleatum subsp. nucleatum (strain ATCC 25586 / DSM 15643 / BCRC 10681 / CIP 101130 / JCM 8532 / KCTC 2640 / LMG 13131 / VPI 4355).